A 206-amino-acid polypeptide reads, in one-letter code: Orotate phosphoribosyltransferase (206 aa).

Residues Arg-97, Lys-98, Lys-101, and 125 to 133 contribute to the 5-phospho-alpha-D-ribose 1-diphosphate site; that span reads NDVIASGRS. Residue Arg-157 coordinates orotate.

It belongs to the purine/pyrimidine phosphoribosyltransferase family. PyrE subfamily. As to quaternary structure, homodimer. Mg(2+) serves as cofactor.

It catalyses the reaction orotidine 5'-phosphate + diphosphate = orotate + 5-phospho-alpha-D-ribose 1-diphosphate. It participates in pyrimidine metabolism; UMP biosynthesis via de novo pathway; UMP from orotate: step 1/2. Its function is as follows. Catalyzes the transfer of a ribosyl phosphate group from 5-phosphoribose 1-diphosphate to orotate, leading to the formation of orotidine monophosphate (OMP). In Chlamydia caviae (strain ATCC VR-813 / DSM 19441 / 03DC25 / GPIC) (Chlamydophila caviae), this protein is Orotate phosphoribosyltransferase.